We begin with the raw amino-acid sequence, 400 residues long: Chalcone synthase C2 (400 aa).

Cys168 is an active-site residue.

It belongs to the thiolase-like superfamily. Chalcone/stilbene synthases family.

It catalyses the reaction (E)-4-coumaroyl-CoA + 3 malonyl-CoA + 3 H(+) = 2',4,4',6'-tetrahydroxychalcone + 3 CO2 + 4 CoA. Its pathway is secondary metabolite biosynthesis; flavonoid biosynthesis. Functionally, the primary product of this enzyme is 4,2',4',6'-tetrahydroxychalcone (also termed naringenin-chalcone or chalcone) which can under specific conditions spontaneously isomerize into naringenin. The protein is Chalcone synthase C2 (C2) of Zea mays (Maize).